A 170-amino-acid polypeptide reads, in one-letter code: Myosin regulatory light chain 2, skeletal muscle isoform type 1 (170 aa).

At Ala-2 the chain carries N,N,N-trimethylalanine. A phosphoserine mark is found at Ser-16 and Ser-17. Residues Thr-26 and Thr-36 each carry the phosphothreonine modification. Positions 26–61 (TQIQEFKEAFTVIDQNRDGIIDKEDLRDTFAAMGRL) constitute an EF-hand 1 domain. Residues Asp-39, Asn-41, Asp-43, and Asp-50 each coordinate Ca(2+). Ser-76 bears the Phosphoserine mark. EF-hand domains lie at 96 to 131 (DPED…QCDR) and 132 to 167 (FSQE…GDAK). Thr-102 carries the post-translational modification Phosphothreonine.

Myosin is a hexamer of 2 heavy chains and 4 light chains.

The protein is Myosin regulatory light chain 2, skeletal muscle isoform type 1 of Oryctolagus cuniculus (Rabbit).